We begin with the raw amino-acid sequence, 308 residues long: Cytochrome c biogenesis protein CcsA (308 aa).

7 helical membrane-spanning segments follow: residues 17–37 (IISIVIPTHLMTLVYEIVGLC), 43–63 (GMITTFFCITGLLVTRWIYSG), 70–90 (LYESLMFLSWSFSLIHIVPYF), 142–162 (MLLSYAALLCGSLLSITLLVI), 213–233 (VIGLGFTLLTIGILSGAVWAN), 246–260 (ETWAFITWTVFAIYL), and 274–294 (AIVASMGFLIIWICYFGVNLL).

It belongs to the CcmF/CycK/Ccl1/NrfE/CcsA family. As to quaternary structure, may interact with Ccs1.

It localises to the plastid. The protein resides in the chloroplast thylakoid membrane. Required during biogenesis of c-type cytochromes (cytochrome c6 and cytochrome f) at the step of heme attachment. This is Cytochrome c biogenesis protein CcsA from Nymphaea alba (White water-lily).